We begin with the raw amino-acid sequence, 516 residues long: Polyprenol-phosphate-mannose--protein mannosyltransferase (516 aa).

9 helical membrane passes run Y113–V133, S143–S163, T166–V186, W234–A254, A275–F295, V384–L404, W413–I433, M437–L457, and L473–Y493.

The protein belongs to the glycosyltransferase 39 family.

The protein resides in the cell membrane. It functions in the pathway protein modification; protein glycosylation. Its function is as follows. Protein O-mannosyltransferase that catalyzes the transfer of a single mannose residue from a polyprenol phospho-mannosyl lipidic donor to the hydroxyl group of selected serine and threonine residues in acceptor proteins. The sequence is that of Polyprenol-phosphate-mannose--protein mannosyltransferase from Mycolicibacterium smegmatis (strain ATCC 700084 / mc(2)155) (Mycobacterium smegmatis).